Consider the following 94-residue polypeptide: Putative septation protein SpoVG (94 aa).

It belongs to the SpoVG family.

Functionally, could be involved in septation. The protein is Putative septation protein SpoVG of Acetivibrio thermocellus (strain ATCC 27405 / DSM 1237 / JCM 9322 / NBRC 103400 / NCIMB 10682 / NRRL B-4536 / VPI 7372) (Clostridium thermocellum).